The following is a 272-amino-acid chain: Probable proteasome subunit alpha type-6 (272 aa).

Residues 243–261 (AARASRAAAEEPQAPTAEA) show a composition bias toward low complexity. The disordered stretch occupies residues 243-272 (AARASRAAAEEPQAPTAEAILDSADAMETD).

It belongs to the peptidase T1A family. The 26S proteasome consists of a 20S proteasome core and two 19S regulatory subunits. The 20S proteasome core is composed of 28 subunits that are arranged in four stacked rings, resulting in a barrel-shaped structure. The two end rings are each formed by seven alpha subunits, and the two central rings are each formed by seven beta subunits. The catalytic chamber with the active sites is on the inside of the barrel.

It localises to the cytoplasm. It is found in the nucleus. Functionally, the proteasome is a multicatalytic proteinase complex which is characterized by its ability to cleave peptides with Arg, Phe, Tyr, Leu, and Glu adjacent to the leaving group at neutral or slightly basic pH. The proteasome has an ATP-dependent proteolytic activity. This Schizosaccharomyces pombe (strain 972 / ATCC 24843) (Fission yeast) protein is Probable proteasome subunit alpha type-6.